Consider the following 141-residue polypeptide: Large ribosomal subunit protein bL17 (141 aa).

This sequence belongs to the bacterial ribosomal protein bL17 family. In terms of assembly, part of the 50S ribosomal subunit. Contacts protein L32.

This chain is Large ribosomal subunit protein bL17, found in Maridesulfovibrio salexigens (strain ATCC 14822 / DSM 2638 / NCIMB 8403 / VKM B-1763) (Desulfovibrio salexigens).